Reading from the N-terminus, the 72-residue chain is UPF0352 protein HI_0840 (72 aa).

Belongs to the UPF0352 family.

The sequence is that of UPF0352 protein HI_0840 from Haemophilus influenzae (strain ATCC 51907 / DSM 11121 / KW20 / Rd).